We begin with the raw amino-acid sequence, 399 residues long: Argininosuccinate synthase (399 aa).

Residues A10–S18 and A38 each bind ATP. An L-citrulline-binding site is contributed by Y89. An ATP-binding site is contributed by G119. T121, N125, and D126 together coordinate L-aspartate. N125 is an L-citrulline binding site. L-citrulline is bound by residues R129, S177, S186, E262, and Y274.

This sequence belongs to the argininosuccinate synthase family. Type 1 subfamily. Homotetramer.

Its subcellular location is the cytoplasm. It catalyses the reaction L-citrulline + L-aspartate + ATP = 2-(N(omega)-L-arginino)succinate + AMP + diphosphate + H(+). Its pathway is amino-acid biosynthesis; L-arginine biosynthesis; L-arginine from L-ornithine and carbamoyl phosphate: step 2/3. This Rippkaea orientalis (strain PCC 8801 / RF-1) (Cyanothece sp. (strain PCC 8801)) protein is Argininosuccinate synthase.